A 663-amino-acid chain; its full sequence is Alcohol oxidase (663 aa).

Residue 8–39 coordinates FAD; it reads DVIVCGGGSTGCVIAGRLANVDENLKVLLIEN. Catalysis depends on H567, which acts as the Proton acceptor. The Microbody targeting signal motif lies at 661–663; it reads ARY.

The protein belongs to the GMC oxidoreductase family. As to quaternary structure, homooctamer. FAD is required as a cofactor.

It is found in the peroxisome matrix. It carries out the reaction a primary alcohol + O2 = an aldehyde + H2O2. The protein operates within energy metabolism; methane degradation. In terms of biological role, catalyzes the oxidation of methanol to formaldehyde and hydrogen peroxide, the first step in the methanol utilization pathway of methylotrophic yeasts. In Candida boidinii (Yeast), this protein is Alcohol oxidase (AOD1).